The chain runs to 173 residues: Crossover junction endodeoxyribonuclease RuvC (173 aa).

Residues Asp-8, Glu-67, and Asp-139 contribute to the active site. Residues Asp-8, Glu-67, and Asp-139 each coordinate Mg(2+).

It belongs to the RuvC family. As to quaternary structure, homodimer which binds Holliday junction (HJ) DNA. The HJ becomes 2-fold symmetrical on binding to RuvC with unstacked arms; it has a different conformation from HJ DNA in complex with RuvA. In the full resolvosome a probable DNA-RuvA(4)-RuvB(12)-RuvC(2) complex forms which resolves the HJ. Requires Mg(2+) as cofactor.

The protein localises to the cytoplasm. It carries out the reaction Endonucleolytic cleavage at a junction such as a reciprocal single-stranded crossover between two homologous DNA duplexes (Holliday junction).. In terms of biological role, the RuvA-RuvB-RuvC complex processes Holliday junction (HJ) DNA during genetic recombination and DNA repair. Endonuclease that resolves HJ intermediates. Cleaves cruciform DNA by making single-stranded nicks across the HJ at symmetrical positions within the homologous arms, yielding a 5'-phosphate and a 3'-hydroxyl group; requires a central core of homology in the junction. The consensus cleavage sequence is 5'-(A/T)TT(C/G)-3'. Cleavage occurs on the 3'-side of the TT dinucleotide at the point of strand exchange. HJ branch migration catalyzed by RuvA-RuvB allows RuvC to scan DNA until it finds its consensus sequence, where it cleaves and resolves the cruciform DNA. The polypeptide is Crossover junction endodeoxyribonuclease RuvC (Pseudoalteromonas atlantica (strain T6c / ATCC BAA-1087)).